We begin with the raw amino-acid sequence, 438 residues long: Acid phosphatase type 7 (438 aa).

Residues 1-26 form the signal peptide; the sequence is MHPLPGYWSCYCLLLLFSLGVQGSLG. Fe cation is bound by residues aspartate 141, aspartate 170, and tyrosine 173. Aspartate 170 lines the Zn(2+) pocket. Asparagine 205 is a binding site for Zn(2+). Residue asparagine 211 is glycosylated (N-linked (GlcNAc...) asparagine). The Zn(2+) site is built by histidine 286 and histidine 333. Histidine 335 provides a ligand contact to Fe cation. Residues asparagine 350 and asparagine 404 are each glycosylated (N-linked (GlcNAc...) asparagine).

The protein belongs to the metallophosphoesterase superfamily. Purple acid phosphatase family. Fe cation serves as cofactor. Requires Zn(2+) as cofactor.

Its subcellular location is the secreted. The catalysed reaction is a phosphate monoester + H2O = an alcohol + phosphate. The sequence is that of Acid phosphatase type 7 from Homo sapiens (Human).